A 117-amino-acid polypeptide reads, in one-letter code: Cuticular protein 47Eg (117 aa).

An N-terminal signal peptide occupies residues 1 to 16; sequence MKFFIAFACLLAVALA. Residues 31 to 97 form the Chitin-binding type R&amp;R domain; the sequence is VDGFAYAVEL…SANPPLPTPP (67 aa).

Functionally, component of the larval cuticle. This Drosophila melanogaster (Fruit fly) protein is Cuticular protein 47Eg (Cpr47Eg).